Consider the following 385-residue polypeptide: Torsin-3A (385 aa).

The N-terminal stretch at 1-21 (MFLGALWLLLLLPLRPPGAQG) is a signal peptide. Asn110 carries an N-linked (GlcNAc...) asparagine glycan. 155-162 (GWSGTGKN) is a binding site for ATP.

It belongs to the ClpA/ClpB family. Torsin subfamily. In terms of assembly, interacts with TOR1AIP1. Post-translationally, N-glycosylated.

The protein resides in the cytoplasm. The protein localises to the endoplasmic reticulum lumen. The protein is Torsin-3A (Tor3a) of Mus musculus (Mouse).